The chain runs to 165 residues: Large ribosomal subunit protein uL10 (165 aa).

This sequence belongs to the universal ribosomal protein uL10 family. In terms of assembly, part of the ribosomal stalk of the 50S ribosomal subunit. The N-terminus interacts with L11 and the large rRNA to form the base of the stalk. The C-terminus forms an elongated spine to which L12 dimers bind in a sequential fashion forming a multimeric L10(L12)X complex.

Forms part of the ribosomal stalk, playing a central role in the interaction of the ribosome with GTP-bound translation factors. This is Large ribosomal subunit protein uL10 from Deinococcus deserti (strain DSM 17065 / CIP 109153 / LMG 22923 / VCD115).